The primary structure comprises 268 residues: Stomatin homolog PYRAB06580 (268 aa).

Residues 1-21 (MILPTNFFVTTIILLFILIFL) traverse the membrane as a helical segment. Coiled-coil stretches lie at residues 125–152 (GQAH…EATD) and 178–213 (KQAE…ISEH).

The protein belongs to the band 7/mec-2 family. In terms of assembly, homotrimer.

The protein resides in the membrane. This Pyrococcus abyssi (strain GE5 / Orsay) protein is Stomatin homolog PYRAB06580.